We begin with the raw amino-acid sequence, 480 residues long: Aspartyl/glutamyl-tRNA(Asn/Gln) amidotransferase subunit B (480 aa).

This sequence belongs to the GatB/GatE family. GatB subfamily. In terms of assembly, heterotrimer of A, B and C subunits.

It catalyses the reaction L-glutamyl-tRNA(Gln) + L-glutamine + ATP + H2O = L-glutaminyl-tRNA(Gln) + L-glutamate + ADP + phosphate + H(+). The catalysed reaction is L-aspartyl-tRNA(Asn) + L-glutamine + ATP + H2O = L-asparaginyl-tRNA(Asn) + L-glutamate + ADP + phosphate + 2 H(+). Functionally, allows the formation of correctly charged Asn-tRNA(Asn) or Gln-tRNA(Gln) through the transamidation of misacylated Asp-tRNA(Asn) or Glu-tRNA(Gln) in organisms which lack either or both of asparaginyl-tRNA or glutaminyl-tRNA synthetases. The reaction takes place in the presence of glutamine and ATP through an activated phospho-Asp-tRNA(Asn) or phospho-Glu-tRNA(Gln). The sequence is that of Aspartyl/glutamyl-tRNA(Asn/Gln) amidotransferase subunit B from Saccharophagus degradans (strain 2-40 / ATCC 43961 / DSM 17024).